Reading from the N-terminus, the 311-residue chain is Methionyl-tRNA formyltransferase (311 aa).

110–113 (SLLP) is a (6S)-5,6,7,8-tetrahydrofolate binding site.

It belongs to the Fmt family.

The catalysed reaction is L-methionyl-tRNA(fMet) + (6R)-10-formyltetrahydrofolate = N-formyl-L-methionyl-tRNA(fMet) + (6S)-5,6,7,8-tetrahydrofolate + H(+). In terms of biological role, attaches a formyl group to the free amino group of methionyl-tRNA(fMet). The formyl group appears to play a dual role in the initiator identity of N-formylmethionyl-tRNA by promoting its recognition by IF2 and preventing the misappropriation of this tRNA by the elongation apparatus. This chain is Methionyl-tRNA formyltransferase, found in Streptococcus pyogenes serotype M12 (strain MGAS2096).